We begin with the raw amino-acid sequence, 313 residues long: tRNA uridine(34) hydroxylase (313 aa).

Residues 124-218 (SDPEVLLIDT…YLEEVPQQES (95 aa)) form the Rhodanese domain. The active-site Cysteine persulfide intermediate is C178.

The protein belongs to the TrhO family.

It carries out the reaction uridine(34) in tRNA + AH2 + O2 = 5-hydroxyuridine(34) in tRNA + A + H2O. Catalyzes oxygen-dependent 5-hydroxyuridine (ho5U) modification at position 34 in tRNAs. This is tRNA uridine(34) hydroxylase from Pseudomonas fluorescens (strain ATCC BAA-477 / NRRL B-23932 / Pf-5).